The sequence spans 865 residues: Rifampicin phosphotransferase (865 aa).

Residues 2 to 314 form an ATP-binding region; that stretch reads SGRLVVDLQD…FHIVQSRPIT (313 aa). ATP is bound by residues K23, R117, G132, T136, Q183, E297, Q309, and R311. Residues 327–752 form a rifampicin-binding region; it reads FRVYLSVGHQ…TSEGVALSGA (426 aa). The interval 403 to 430 is disordered; that stretch reads ENGEFEPTPAETDGGAPPAGDGAEPDEA. Residues 409–424 show a composition bias toward low complexity; the sequence is PTPAETDGGAPPAGDG. A swivel phosphohistidine region spans residues 765-863; it reads GLAVSAGTVE…VHGTEGYIEL (99 aa). H823 serves as the catalytic Tele-phosphohistidine intermediate.

It belongs to the rifampicin phosphotransferase family.

It carries out the reaction rifampicin + ATP + H2O = 21-phosphorifampicin + AMP + phosphate + 2 H(+). Its function is as follows. Catalyzes the phosphorylation of rifampicin, also known as rifampin (RIF), leading to its inactivation. Confers high level resistance to a variety of clinically used rifamycin antibiotics. The sequence is that of Rifampicin phosphotransferase from Streptomyces sp.